Reading from the N-terminus, the 358-residue chain is Myb family transcription factor APL (358 aa).

The 61-residue stretch at Thr-31–Gln-91 folds into the HTH myb-type domain. Residues Pro-62–Arg-87 constitute a DNA-binding region (H-T-H motif). The stretch at Arg-125–Gln-145 forms a coiled coil. The LHEQLE motif lies at Leu-138 to Glu-143. The disordered stretch occupies residues Arg-313–Gly-358.

This sequence belongs to the MYB-CC family. As to expression, expressed in shoots and roots, specifically in the developing protophloem sieve elements. Detected in phloem and/or cambium. Expressed in the phloem tissues of various organs, including leaves and cotyledons, during vegetative growth.

The protein resides in the nucleus. Its function is as follows. Transcription factor required for phloem identity. Has a dual role both in promoting phloem differentiation and in repressing xylem differentiation during vascular development. Regulates the expression of the transcription factor NAC045 (AC A4VCM0). May activate the transcription of specific genes involved in phosphate uptake or assimilation. Promotes flowering through transcriptional activation of both FT and its transport machinery component, FTIP1. The sequence is that of Myb family transcription factor APL from Arabidopsis thaliana (Mouse-ear cress).